The primary structure comprises 674 residues: MPRRILVTSALPYANGPIHLGHLVEYIQTDIWVRFQRMRGHECYYVCADDAHGTPIMLRAQQEGVTPETLIDQCSQEHQADFADFAISFDSYHSTHSAENRTLSETIYLRNRDKGHITTRIVRQAYDPVKGMFLPDRFIRGTCPRCDALDQYGDNCEVCGATYSPTELKEAISVLSGTPPIERESEHYFFKLNDFEPLLKRWTQGGHLQPEMANKLNEWFEAGLQDWDISRDAPYFGFPIPESTDKYFYVWLDAPIGYLASFKHLCDREGLDFDSFMTPHSTAELYHFIGKDILYFHALFWPAMLHGAGFRLPTAIFAHGFLTVNGQKMSKSRGTFIKARTYLKHLNPEYLRYYFAAKLGSGIEDLDLNFDDFMSRVNADLVGKVINIASRCAGFINKHFQNRLADRLVEKSLFQKFVAASEHLAQHYEAREFGHAMREIMALADQANRYIDEQQPWVAIKDPERKQEVQEVCTLGLNLFRQLMIYLKPVLPMTTEKAEAFFNSQSLTWSDVDTPLLNHTINRFEPLMIRAEKIKIEAMIEDSKEHLQQNTNAVKPTALLAEHPIAETIQFESFAKLDLRIARILKAEQVEGADKLLRLELDLDGETRQVFAGIKAAYAPESLVGRLTVMVANLAPRKMRFGISEGMVLAAGPGGKEIYLLNPDEGARPGMRVK.

Positions 12–22 match the 'HIGH' region motif; that stretch reads PYANGPIHLGH. Residues Cys143, Cys146, Cys156, and Cys159 each coordinate Zn(2+). A 'KMSKS' region motif is present at residues 328 to 332; sequence KMSKS. Lys331 contacts ATP. In terms of domain architecture, tRNA-binding spans 573–674; the sequence is SFAKLDLRIA…EGARPGMRVK (102 aa).

The protein belongs to the class-I aminoacyl-tRNA synthetase family. MetG type 1 subfamily. Homodimer. Requires Zn(2+) as cofactor.

The protein localises to the cytoplasm. The catalysed reaction is tRNA(Met) + L-methionine + ATP = L-methionyl-tRNA(Met) + AMP + diphosphate. Its function is as follows. Is required not only for elongation of protein synthesis but also for the initiation of all mRNA translation through initiator tRNA(fMet) aminoacylation. This chain is Methionine--tRNA ligase, found in Nitrosococcus oceani (strain ATCC 19707 / BCRC 17464 / JCM 30415 / NCIMB 11848 / C-107).